Here is a 124-residue protein sequence, read N- to C-terminus: Small ribosomal subunit protein uS12 (124 aa).

Position 89 is a 3-methylthioaspartic acid (Asp-89).

This sequence belongs to the universal ribosomal protein uS12 family. In terms of assembly, part of the 30S ribosomal subunit. Contacts proteins S8 and S17. May interact with IF1 in the 30S initiation complex.

Functionally, with S4 and S5 plays an important role in translational accuracy. Interacts with and stabilizes bases of the 16S rRNA that are involved in tRNA selection in the A site and with the mRNA backbone. Located at the interface of the 30S and 50S subunits, it traverses the body of the 30S subunit contacting proteins on the other side and probably holding the rRNA structure together. The combined cluster of proteins S8, S12 and S17 appears to hold together the shoulder and platform of the 30S subunit. The protein is Small ribosomal subunit protein uS12 of Psychrobacter sp. (strain PRwf-1).